Here is a 211-residue protein sequence, read N- to C-terminus: C-type lectin domain-containing protein 158 (211 aa).

The first 16 residues, 1–16, serve as a signal peptide directing secretion; that stretch reads MQKFILSAFVVALVAA.

The chain is C-type lectin domain-containing protein 158 (clec-158) from Caenorhabditis elegans.